The following is an 896-amino-acid chain: Zinc finger protein 574 (896 aa).

3 C2H2-type zinc fingers span residues 16–38, 76–98, and 126–148; these read YVCSECNQLYGSLEEVLMHQNSH, YQCLECGQLLMSPSQLLEHQELH, and YECVDCKALFASQELWLNHRQTH. The residue at position 164 (S164) is a Phosphoserine. The C2H2-type 4 zinc finger occupies 214 to 236; it reads YKCSECSQLFQLPADFLEHQATH. The segment covering 259-272 has biased composition (low complexity); the sequence is VEVPVSQPEPVPSS. The disordered stretch occupies residues 259 to 303; the sequence is VEVPVSQPEPVPSSDHSYELRNGEALGRDRRGRRARRNNSGEPGG. Residues 274–287 show a composition bias toward basic and acidic residues; the sequence is HSYELRNGEALGRD. At S298 the chain carries Phosphoserine. C2H2-type zinc fingers lie at residues 309 to 331, 336 to 358, 364 to 386, and 392 to 413; these read LFCSACDQLFLSPHQLQQHLRSH, FKCPLCSRVFPSPSSLDQHLGDH, FLCVDCGLAFGTEALLLAHRRAH, and HSCPCGKTFVNLTKFLYHRRTH. Residues 434–460 form a disordered region; it reads FPEPAPAETGEPEAPEPPVAEESSAEP. C2H2-type zinc fingers lie at residues 466–489, 495–517, 523–545, 551–573, 579–601, and 607–630; these read YRCLLCSREFGKALQLTRHQRFVH, HKCSICGKMFKKKSHVRNHLRTH, FPCPDCSKPFNSPANLARHRLTH, YRCGDCGKAFTQSSTLRQHRLVH, YRCQECGVRFHRPYRLLMHRYHH, and YKCRECPRSFLLRRLLEVHQLVAH. A C2H2-type 15; degenerate zinc finger spans residues 636–659; the sequence is HRCSSCGAAFPSSLRLREHRCAAA. Residues 667-689 form a C2H2-type 16 zinc finger; that stretch reads FECGTCGKKVGSAARLQAHEAAH. The tract at residues 687-733 is disordered; sequence AAHAAAGPGEVLAKEPPAPRAPRAARTPITSPTTLGSAAPAAPAAPA. A compositionally biased stretch (low complexity) spans 707–732; sequence APRAARTPITSPTTLGSAAPAAPAAP. A Phosphoserine modification is found at S717. 4 C2H2-type zinc fingers span residues 738–760, 766–788, 794–816, and 822–844; these read LECSECKKLFSTETSLQVHRRIH, YPCPDCGKAFRQSTHLKDHRRLH, FACEVCGKAFAISMRLAEHRRIH, and YSCPDCGKSYRSFSNLWKHRKTH. R832 is modified (asymmetric dimethylarginine).

This sequence belongs to the krueppel C2H2-type zinc-finger protein family.

The protein localises to the nucleus. May be involved in transcriptional regulation. The protein is Zinc finger protein 574 (ZNF574) of Bos taurus (Bovine).